A 151-amino-acid chain; its full sequence is 3-hydroxyacyl-[acyl-carrier-protein] dehydratase FabZ (151 aa).

Residue histidine 49 is part of the active site.

It belongs to the thioester dehydratase family. FabZ subfamily.

It localises to the cytoplasm. It catalyses the reaction a (3R)-hydroxyacyl-[ACP] = a (2E)-enoyl-[ACP] + H2O. In terms of biological role, involved in unsaturated fatty acids biosynthesis. Catalyzes the dehydration of short chain beta-hydroxyacyl-ACPs and long chain saturated and unsaturated beta-hydroxyacyl-ACPs. The sequence is that of 3-hydroxyacyl-[acyl-carrier-protein] dehydratase FabZ from Bordetella bronchiseptica (strain ATCC BAA-588 / NCTC 13252 / RB50) (Alcaligenes bronchisepticus).